The following is a 1163-amino-acid chain: Spike glycoprotein (1163 aa).

An N-terminal signal peptide occupies residues 1-18 (MLERSLLLATLLSALCSA). Topologically, residues 19 to 1096 (NLFGNNSYVY…LKTYIKWPWY (1078 aa)) are extracellular. N-linked (GlcNAc...) asparagine; by host glycosylation is found at asparagine 23, asparagine 51, asparagine 74, asparagine 102, asparagine 139, asparagine 145, asparagine 164, asparagine 179, asparagine 213, asparagine 238, asparagine 248, asparagine 265, asparagine 272, asparagine 277, asparagine 307, asparagine 426, asparagine 448, asparagine 514, asparagine 531, asparagine 543, asparagine 580, asparagine 592, asparagine 670, and asparagine 677. The interval 770 to 875 (IPFATQLQAR…QVDRIITGRL (106 aa)) is heptad repeat 1 (HR1). Residues 823-867 (QDVVNKQSSILTETMASLNKNFGAISSVLQDIYQQLDSIQADAQV) adopt a coiled-coil conformation. N-linked (GlcNAc...) asparagine; by host glycosylation is found at asparagine 948, asparagine 961, asparagine 980, asparagine 1015, asparagine 1039, asparagine 1052, and asparagine 1075. Residues 1025–1106 (NDDFDFDDEL…VWLAIAFLTI (82 aa)) are heptad repeat 2 (HR2). A coiled-coil region spans residues 1056-1084 (PILDIGSEIDRIQGVIQGLNDSLIDLETL). The helical transmembrane segment at 1097 to 1117 (VWLAIAFLTIIFILVLCWIFF) threads the bilayer. Topologically, residues 1118 to 1163 (MTGCCGCCCGCFGIIPLMSKCGKKSSYYTTFDNDVVYEQYRPKKSV) are cytoplasmic. Positions 1160 to 1163 (KKSV) match the Di-lysine motif motif.

The protein belongs to the gammacoronaviruses spike protein family. Homotrimer; each monomer consists of a S1 and a S2 subunit. The resulting peplomers protrude from the virus surface as spikes. Specific enzymatic cleavages in vivo yield mature proteins. The precursor is processed into S1 and S2 by host cell furin or furin-like protease to yield the mature S1 and S2 proteins. The cleavage site between S1 and S2 requires the optimal sequence [KR]-X-[KR]-R. Additionally, a second cleavage leads to the release of a fusion peptide after viral attachment to host cell receptor.

It localises to the virion membrane. Its subcellular location is the host endoplasmic reticulum-Golgi intermediate compartment membrane. In terms of biological role, attaches the virion to the host cell membrane by interacting with sialic acids, initiating the infection. Its function is as follows. Mediates fusion of the virion and cellular membranes by acting as a class I viral fusion protein. Under the current model, the protein has at least 3 conformational states: pre-fusion native state, pre-hairpin intermediate state, and post-fusion hairpin state. During viral and target cell membrane fusion, the coiled coil regions (heptad repeats) assume a trimer-of-hairpins structure, positioning the fusion peptide in close proximity to the C-terminal region of the ectodomain. The formation of this structure appears to drive apposition and subsequent fusion of viral and target cell membranes. Acts as a viral fusion peptide after S2 cleavage occurring upon virus endocytosis. This Gallus gallus (Chicken) protein is Spike glycoprotein.